The primary structure comprises 602 residues: Toxin YwqJ (602 aa).

Residues 1–235 enclose the LXG domain; that stretch reads MSKVFESKSL…TTYIDAKTQQ (235 aa). Coiled coils occupy residues 6-41 and 227-251; these read ESKS…VADL and TYID…EANK.

The protein in the N-terminal section; belongs to the LXG family. As to quaternary structure, probably interacts with cognate immunity protein YwqK but not with non-cognate immunity proteins. The interaction inhibits the toxic activity of YwqJ.

Its subcellular location is the secreted. In terms of biological role, toxic component of one of 6 LXG toxin-immunity modules in this strain. They promote kin selection, mediate competition in biofilms, and drive spatial segregation of different strains, indicating that LXG toxins may help avoid warfare between strains in biofilms. Mediates intercellular competition during biofilm formation; disruption of the operon disadvantages the bacteria, but overexpression of the cognate immunity protein restores growth in competition with wild-type. Overexpression alone in situ causes growth arrest but not cell lysis; no effect is seen on DNA or rRNA. Co-overexpression with cognate immunity protein YwqK does not cause growth arrest. The toxic effect is dependent on the epsA and tapA operons which are required for biofilm formation. Its toxic effects are probably neutralized by its cognate immunity protein YwqK, but not by immunity proteins specific to other toxins with the LXG domain. May have deaminase activity. This Bacillus subtilis (strain 168) protein is Toxin YwqJ (ywqJ).